The primary structure comprises 356 residues: Competence protein ComGA (356 aa).

144-151 (GPTGSGKT) is an ATP binding site.

Belongs to the GSP E family.

The protein localises to the cell membrane. In terms of biological role, required for uptake of DNA by competent cells. This is Competence protein ComGA (comGA) from Bacillus subtilis (strain 168).